The following is a 101-amino-acid chain: Apolipoprotein C-II (101 aa).

The first 22 residues, 1–22 (MGTRYFLVGFLILLVLGFEAQG), serve as a signal peptide directing secretion. The lipid binding stretch occupies residues 66–74 (TVDEKIRDI). The lipoprotein lipase cofactor stretch occupies residues 78–101 (STAAVTTYAGIITDQVFSILSGED).

Belongs to the apolipoprotein C2 family. In terms of processing, proapolipoprotein C-II is synthesized as a sialic acid containing glycoprotein which is subsequently desialylated prior to its proteolytic processing. Proapolipoprotein C-II, the major form found in plasma undergoes proteolytic cleavage of its N-terminal hexapeptide to generate apolipoprotein C-II, which occurs as the minor form in plasma.

It localises to the secreted. Component of chylomicrons, very low-density lipoproteins (VLDL), low-density lipoproteins (LDL), and high-density lipoproteins (HDL) in plasma. Plays an important role in lipoprotein metabolism as an activator of lipoprotein lipase. Both proapolipoprotein C-II and apolipoprotein C-II can activate lipoprotein lipase. The polypeptide is Apolipoprotein C-II (APOC2) (Capra hircus aegagrus (Wild goat)).